The sequence spans 918 residues: Rap guanine nucleotide exchange factor 3 (918 aa).

A Phosphoserine modification is found at S79. Residues A110–G186 enclose the DEP domain. The interval T218–H242 is interaction with PDE3B. Residues G311–A314 and R321–A322 contribute to the 3',5'-cyclic AMP site. The interval T369–V388 is disordered. The region spanning N384–H521 is the N-terminal Ras-GEF domain. An interaction with PDE3B region spans residues E398–L422. Phosphoserine is present on residues S531 and S859. The 220-residue stretch at S665 to S884 folds into the Ras-GEF domain.

Interacts with PDE3B and PIK3R6; form a signaling complex that regulates phosphatidylinositol 3-kinase gamma in angiogenesis.

The protein localises to the cytoplasm. Its subcellular location is the membrane. Guanine nucleotide exchange factor (GEF) for RAP1A and RAP2A small GTPases that is activated by binding cAMP. Through simultaneous binding of PDE3B to RAPGEF3 and PIK3R6 is assembled in a signaling complex in which it activates the PI3K gamma complex and which is involved in angiogenesis. Plays a role in the modulation of the cAMP-induced dynamic control of endothelial barrier function through a pathway that is independent on Rho-mediated signaling. Required for the actin rearrangement at cell-cell junctions, such as stress fibers and junctional actin. The chain is Rap guanine nucleotide exchange factor 3 (Rapgef3) from Mus musculus (Mouse).